We begin with the raw amino-acid sequence, 143 residues long: Phosphoribosyl-AMP cyclohydrolase (143 aa).

Asp86 is a binding site for Mg(2+). Residue Cys87 coordinates Zn(2+). Positions 88 and 90 each coordinate Mg(2+). The Zn(2+) site is built by Cys103 and Cys110.

It belongs to the PRA-CH family. Homodimer. The cofactor is Mg(2+). Zn(2+) is required as a cofactor.

The protein localises to the cytoplasm. The catalysed reaction is 1-(5-phospho-beta-D-ribosyl)-5'-AMP + H2O = 1-(5-phospho-beta-D-ribosyl)-5-[(5-phospho-beta-D-ribosylamino)methylideneamino]imidazole-4-carboxamide. It participates in amino-acid biosynthesis; L-histidine biosynthesis; L-histidine from 5-phospho-alpha-D-ribose 1-diphosphate: step 3/9. Its function is as follows. Catalyzes the hydrolysis of the adenine ring of phosphoribosyl-AMP. This Rhodospirillum rubrum (strain ATCC 11170 / ATH 1.1.1 / DSM 467 / LMG 4362 / NCIMB 8255 / S1) protein is Phosphoribosyl-AMP cyclohydrolase.